Consider the following 315-residue polypeptide: MNPNFLDFEQPIADLQAKIEELRLVGNDNSLNIGDEISRLQDKSKTLTESIFGNLTSWQIARMARHPRRPYTLDYIENIFTEFDELHGDRHFSDDAAIVGGIARLDGQPVMVIGHQKGREVREKVRRNFGMPRPEGYRKACRLMEMAERFKMPILTFIDTPGAYPGIDAEERNQSEAIAWNLRVMARLKTPIIATVIGEGGSGGALAIGVCDQLNMLQYSTYAVISPEGCASILWKTAEKAPDAAEAMGITADRLKGLGIVDKVIAEPLGGAHRDPVAAAALIREELSSQLAMLKEFDNDELLARRYDRLMSYGL.

Residues 40–293 enclose the CoA carboxyltransferase C-terminal domain; the sequence is LQDKSKTLTE…REELSSQLAM (254 aa).

Belongs to the AccA family. As to quaternary structure, acetyl-CoA carboxylase is a heterohexamer composed of biotin carboxyl carrier protein (AccB), biotin carboxylase (AccC) and two subunits each of ACCase subunit alpha (AccA) and ACCase subunit beta (AccD).

The protein localises to the cytoplasm. The catalysed reaction is N(6)-carboxybiotinyl-L-lysyl-[protein] + acetyl-CoA = N(6)-biotinyl-L-lysyl-[protein] + malonyl-CoA. The protein operates within lipid metabolism; malonyl-CoA biosynthesis; malonyl-CoA from acetyl-CoA: step 1/1. Functionally, component of the acetyl coenzyme A carboxylase (ACC) complex. First, biotin carboxylase catalyzes the carboxylation of biotin on its carrier protein (BCCP) and then the CO(2) group is transferred by the carboxyltransferase to acetyl-CoA to form malonyl-CoA. The protein is Acetyl-coenzyme A carboxylase carboxyl transferase subunit alpha of Pseudomonas savastanoi pv. phaseolicola (strain 1448A / Race 6) (Pseudomonas syringae pv. phaseolicola (strain 1448A / Race 6)).